A 428-amino-acid polypeptide reads, in one-letter code: Enolase (428 aa).

Glutamine 163 serves as a coordination point for (2R)-2-phosphoglycerate. Residue glutamate 205 is the Proton donor of the active site. Mg(2+) is bound by residues aspartate 242, glutamate 286, and aspartate 313. Positions 338, 367, 368, and 389 each coordinate (2R)-2-phosphoglycerate. Residue lysine 338 is the Proton acceptor of the active site.

It belongs to the enolase family. It depends on Mg(2+) as a cofactor.

Its subcellular location is the cytoplasm. It is found in the secreted. The protein resides in the cell surface. The enzyme catalyses (2R)-2-phosphoglycerate = phosphoenolpyruvate + H2O. Its pathway is carbohydrate degradation; glycolysis; pyruvate from D-glyceraldehyde 3-phosphate: step 4/5. Its function is as follows. Catalyzes the reversible conversion of 2-phosphoglycerate (2-PG) into phosphoenolpyruvate (PEP). It is essential for the degradation of carbohydrates via glycolysis. The sequence is that of Enolase from Lactobacillus helveticus (strain DPC 4571).